We begin with the raw amino-acid sequence, 289 residues long: WUSCHEL-related homeobox 1 (289 aa).

The segment covering 1-11 (MDHMQQQQRQQ) has biased composition (low complexity). The interval 1–34 (MDHMQQQQRQQVGGGGGEEVAGRGGVPVCRPSGT) is disordered. Gly residues predominate over residues 12–25 (VGGGGGEEVAGRGG). Positions 31–96 (PSGTRWTPTT…NHKARERQKK (66 aa)) form a DNA-binding region, homeobox; WUS-type.

This sequence belongs to the WUS homeobox family. Interacts with TPR1, TPR2 and TPR3. Expressed in young leaf primordia. Expressed in branch an floral meristems. Transiently expressed in the shoot apex.

The protein localises to the nucleus. Transcription repressor required for the formation and development of tiller buds and panicles. Required for tiller formation and female sterility. Required for the early developmental stages of axillary meristem formation. Plays a role in maintaining the axillary premeristem zone and in promoting the formation of the axillary meristem by promoting OSH1 expression. Does not seem to be involved in maintenance of the shoot apical meristem (SAM). The polypeptide is WUSCHEL-related homeobox 1 (Oryza sativa subsp. japonica (Rice)).